We begin with the raw amino-acid sequence, 503 residues long: MIMTKQKNTLAERLNIGDEVRELKLGATFNPKNTSTAFHTIKYDFKPASVDTSRMASVDVGPNNQVTVIVPNSESSGVPHTVYKGNQREHAKECLMIYDKETGAITIEKLNHNIQVKKTRSEISSKSSHLPPQNAAIMQGQVPGQQISNGSGPSTNVASGHGPGSGAKLENSTMRITSKTKVSTGSRRNNIIDFKPRNSPMQQSSPSRPVAIHRSPQSAPAWDANNAQQTLPSIPMITDDDDFGLRAALHNGSQANTSGSSTGSAVGHSDYGSASSSSHMGKQRQAPHHGHAKRQQRSSPPMVQQQPNFGRNSYNGGNNYAQQQQHEQQRPSPYGHGNSMPMDLDSSRDHELTSKSVAHAAAVLEQQIGGALSASSSSSESDSSDSDSGSDSDDSTEDDRPSQQQQQHQHKAAQMHHQQQQQQQHHLQQQQQQQHFNQLPNLGLGSISPSYGNNHHQQQSRHHPHQQQQKQQSGIYASNGGFPNDLLQNDLQLSSNSSDEDDD.

Composition is skewed to polar residues over residues 143 to 158 (PGQQ…TNVA) and 170 to 189 (ENST…SRRN). 2 disordered regions span residues 143–223 (PGQQ…PAWD) and 251–503 (NGSQ…EDDD). Serine 199 is modified (phosphoserine). Residues 251–264 (NGSQANTSGSSTGS) are compositionally biased toward polar residues. Residues 281 to 296 (GKQRQAPHHGHAKRQQ) show a composition bias toward basic residues. Residues 297–311 (RSSPPMVQQQPNFGR) show a composition bias toward polar residues. Over residues 312–326 (NSYNGGNNYAQQQQH) the composition is skewed to low complexity. The segment covering 382-397 (DSSDSDSGSDSDDSTE) has biased composition (acidic residues). 2 stretches are compositionally biased toward low complexity: residues 415–435 (MHHQ…QQQH) and 484–497 (NDLL…SSNS).

The protein belongs to the EAF family.

The protein resides in the nucleus. Functionally, promotes transcriptional elongation by Su(Tpl)/ELL. Essential for development. The sequence is that of Ell-associated factor Eaf from Drosophila ananassae (Fruit fly).